We begin with the raw amino-acid sequence, 175 residues long: NADH-quinone oxidoreductase subunit I 1 (175 aa).

2 4Fe-4S ferredoxin-type domains span residues 44–74 (LNRWPDGLEKCIGCELCAWACPADAIFVESA) and 90–119 (RVYQINYLRCIGCGFCIEACPTRALTMIND). The [4Fe-4S] cluster site is built by C54, C57, C60, C64, C99, C102, C105, and C109.

The protein belongs to the complex I 23 kDa subunit family. NDH-1 is composed of 14 different subunits. Subunits NuoA, H, J, K, L, M, N constitute the membrane sector of the complex. [4Fe-4S] cluster is required as a cofactor.

The protein resides in the cell membrane. The catalysed reaction is a quinone + NADH + 5 H(+)(in) = a quinol + NAD(+) + 4 H(+)(out). Its function is as follows. NDH-1 shuttles electrons from NADH, via FMN and iron-sulfur (Fe-S) centers, to quinones in the respiratory chain. The immediate electron acceptor for the enzyme in this species is believed to be menaquinone. Couples the redox reaction to proton translocation (for every two electrons transferred, four hydrogen ions are translocated across the cytoplasmic membrane), and thus conserves the redox energy in a proton gradient. The polypeptide is NADH-quinone oxidoreductase subunit I 1 (Mycolicibacterium paratuberculosis (strain ATCC BAA-968 / K-10) (Mycobacterium paratuberculosis)).